Consider the following 354-residue polypeptide: Probable L-ascorbate-6-phosphate lactonase UlaG (354 aa).

This sequence belongs to the UlaG family. It depends on a divalent metal cation as a cofactor.

The protein resides in the cytoplasm. The catalysed reaction is L-ascorbate 6-phosphate + H2O = 3-dehydro-L-gulonate 6-phosphate. It functions in the pathway cofactor degradation; L-ascorbate degradation; D-xylulose 5-phosphate from L-ascorbate: step 1/4. Functionally, probably catalyzes the hydrolysis of L-ascorbate-6-P into 3-keto-L-gulonate-6-P. Is essential for L-ascorbate utilization under anaerobic conditions. This is Probable L-ascorbate-6-phosphate lactonase UlaG from Escherichia coli O127:H6 (strain E2348/69 / EPEC).